Reading from the N-terminus, the 1530-residue chain is B-cell CLL/lymphoma 9-like protein (1530 aa).

Disordered regions lie at residues 1–101 (MHSE…VLEP), 155–187 (QGHS…TDLH), 246–353 (HISS…PSVL), 398–439 (SGTG…IGGG), 473–503 (QTQN…LSSP), 821–1076 (QNGR…QNPL), 1250–1279 (KGMS…SEVI), and 1310–1331 (SETM…QVSS). The segment covering 8–18 (SNHGKQVTSGA) has biased composition (polar residues). Residues 19–34 (QSQLPNVNQAQQQAPA) show a composition bias toward low complexity. Over residues 81 to 93 (ERSVSIDTGDQRE) the composition is skewed to basic and acidic residues. The span at 156–165 (GHSGSSTTGH) shows a compositional bias: low complexity. A compositionally biased stretch (gly residues) spans 170-180 (GGPGLGSGHGP). Polar residues-rich tracts occupy residues 247-264 (ISSS…QSGT) and 278-287 (GTSTPSSTGH). Composition is skewed to low complexity over residues 409–426 (GPNG…NSND) and 485–503 (SLMG…LSSP). Composition is skewed to polar residues over residues 875 to 891 (LSST…TGSR), 920 to 930 (QLKSPSLSQEP), and 944 to 953 (SPSQLPQSGP). 3 stretches are compositionally biased toward low complexity: residues 960-971 (AASGAGTPSSTS), 979-994 (GPSL…PGHL), and 1031-1060 (SSST…INPS). Positions 1258–1268 (PHQPDSFPPMP) are enriched in pro residues.

This sequence belongs to the BCL9 family.

The protein localises to the nucleus. Functionally, transcriptional regulator that may act as an activator. Plays a role for mesoderm patterning in early embryogenesis. The polypeptide is B-cell CLL/lymphoma 9-like protein (bcl9l) (Danio rerio (Zebrafish)).